Here is a 161-residue protein sequence, read N- to C-terminus: 2-C-methyl-D-erythritol 2,4-cyclodiphosphate synthase (161 aa).

Residues aspartate 14 and histidine 16 each coordinate a divalent metal cation. Residues 14-16 (DVH) and 40-41 (HS) contribute to the 4-CDP-2-C-methyl-D-erythritol 2-phosphate site. Histidine 48 contributes to the a divalent metal cation binding site. Residues 62–64 (DLG), phenylalanine 142, and arginine 145 each bind 4-CDP-2-C-methyl-D-erythritol 2-phosphate.

It belongs to the IspF family. As to quaternary structure, homotrimer. A divalent metal cation serves as cofactor.

It catalyses the reaction 4-CDP-2-C-methyl-D-erythritol 2-phosphate = 2-C-methyl-D-erythritol 2,4-cyclic diphosphate + CMP. It functions in the pathway isoprenoid biosynthesis; isopentenyl diphosphate biosynthesis via DXP pathway; isopentenyl diphosphate from 1-deoxy-D-xylulose 5-phosphate: step 4/6. In terms of biological role, involved in the biosynthesis of isopentenyl diphosphate (IPP) and dimethylallyl diphosphate (DMAPP), two major building blocks of isoprenoid compounds. Catalyzes the conversion of 4-diphosphocytidyl-2-C-methyl-D-erythritol 2-phosphate (CDP-ME2P) to 2-C-methyl-D-erythritol 2,4-cyclodiphosphate (ME-CPP) with a corresponding release of cytidine 5-monophosphate (CMP). The chain is 2-C-methyl-D-erythritol 2,4-cyclodiphosphate synthase from Acidothermus cellulolyticus (strain ATCC 43068 / DSM 8971 / 11B).